The chain runs to 368 residues: Isopentenyl-diphosphate delta-isomerase (368 aa).

Residue 7 to 8 (RK) coordinates substrate. Residues threonine 65, 66–68 (GMT), serine 96, and asparagine 125 contribute to the FMN site. 96–98 (SQR) contributes to the substrate binding site. A substrate-binding site is contributed by glutamine 160. Glutamate 161 provides a ligand contact to Mg(2+). FMN is bound by residues lysine 193, serine 218, threonine 223, 275-277 (GIR), and 296-297 (AL).

Belongs to the IPP isomerase type 2 family. Homooctamer. Dimer of tetramers. FMN serves as cofactor. NADPH is required as a cofactor. Requires Mg(2+) as cofactor.

Its subcellular location is the cytoplasm. It catalyses the reaction isopentenyl diphosphate = dimethylallyl diphosphate. Functionally, involved in the biosynthesis of isoprenoids. Catalyzes the 1,3-allylic rearrangement of the homoallylic substrate isopentenyl (IPP) to its allylic isomer, dimethylallyl diphosphate (DMAPP). This Saccharolobus solfataricus (strain ATCC 35092 / DSM 1617 / JCM 11322 / P2) (Sulfolobus solfataricus) protein is Isopentenyl-diphosphate delta-isomerase.